The primary structure comprises 122 residues: Large ribosomal subunit protein uL18 (122 aa).

Belongs to the universal ribosomal protein uL18 family. Part of the 50S ribosomal subunit; part of the 5S rRNA/L5/L18/L25 subcomplex. Contacts the 5S and 23S rRNAs.

Its function is as follows. This is one of the proteins that bind and probably mediate the attachment of the 5S RNA into the large ribosomal subunit, where it forms part of the central protuberance. The polypeptide is Large ribosomal subunit protein uL18 (Hydrogenobaculum sp. (strain Y04AAS1)).